The sequence spans 450 residues: Phosphoglucosamine mutase (450 aa).

Residue S102 is the Phosphoserine intermediate of the active site. The Mg(2+) site is built by S102, D243, D245, and D247. S102 carries the post-translational modification Phosphoserine.

It belongs to the phosphohexose mutase family. Mg(2+) serves as cofactor. Activated by phosphorylation.

It catalyses the reaction alpha-D-glucosamine 1-phosphate = D-glucosamine 6-phosphate. Functionally, catalyzes the conversion of glucosamine-6-phosphate to glucosamine-1-phosphate. The chain is Phosphoglucosamine mutase from Rhizobium etli (strain CIAT 652).